The following is a 276-amino-acid chain: Large ribosomal subunit protein uL2 (276 aa).

A disordered region spans residues 211–276; it reads RNRHRGIRPQ…KLIISRRKGK (66 aa). A compositionally biased stretch (basic and acidic residues) spans 230 to 240; it reads DHPHGGGEGKK.

This sequence belongs to the universal ribosomal protein uL2 family. Part of the 50S ribosomal subunit. Forms a bridge to the 30S subunit in the 70S ribosome.

In terms of biological role, one of the primary rRNA binding proteins. Required for association of the 30S and 50S subunits to form the 70S ribosome, for tRNA binding and peptide bond formation. It has been suggested to have peptidyltransferase activity; this is somewhat controversial. Makes several contacts with the 16S rRNA in the 70S ribosome. The polypeptide is Large ribosomal subunit protein uL2 (Campylobacter jejuni subsp. doylei (strain ATCC BAA-1458 / RM4099 / 269.97)).